Reading from the N-terminus, the 331-residue chain is Ubiquinone biosynthesis protein UbiU (331 aa).

The [4Fe-4S] cluster site is built by C169, C176, C193, and C232.

It belongs to the peptidase U32 family. UbiU subfamily. Forms a heterodimer with UbiV. [4Fe-4S] cluster serves as cofactor.

The protein operates within cofactor biosynthesis; ubiquinone biosynthesis. In terms of biological role, required for O(2)-independent ubiquinone (coenzyme Q) biosynthesis. Together with UbiV, is essential for the C6-hydroxylation reaction in the oxygen-independent ubiquinone biosynthesis pathway. This chain is Ubiquinone biosynthesis protein UbiU, found in Escherichia coli (strain K12).